Reading from the N-terminus, the 986-residue chain is Ephrin type-B receptor 2 (986 aa).

The signal sequence occupies residues 1–18; the sequence is MAVRRLGAALLLLPLLAA. The Extracellular portion of the chain corresponds to 19 to 543; that stretch reads VEETLMDSTT…QTSIKEKLPL (525 aa). Residues 20-202 form the Eph LBD domain; it reads EETLMDSTTA…FYRKCPRIIQ (183 aa). 2 disulfide bridges follow: Cys62–Cys184 and Cys97–Cys107. N-linked (GlcNAc...) asparagine glycans are attached at residues Asn265, Asn336, Asn428, and Asn482. 2 consecutive Fibronectin type-III domains span residues 324-434 and 435-530; these read IPSA…TNQA and APSA…TMTE. The helical transmembrane segment at 544 to 564 threads the bilayer; the sequence is IVGSSAAGLVFLIAVVVIAIV. Residues 565-986 lie on the Cytoplasmic side of the membrane; that stretch reads CNRRGFERAD…QMNQIQSVEV (422 aa). One can recognise a Protein kinase domain in the interval 621–884; that stretch reads VKIEQVIGAG…QIVNTLDKMI (264 aa). Residues 627 to 635 and Lys653 each bind ATP; that span reads IGAGEFGEV. Residue Asp746 is the Proton acceptor of the active site. Lys891 is covalently cross-linked (Glycyl lysine isopeptide (Lys-Gly) (interchain with G-Cter in ubiquitin)). Residues 913 to 977 form the SAM domain; it reads TSFNTVDEWL…LNSIQVMRAQ (65 aa). The short motif at 984–986 is the PDZ-binding element; it reads VEV.

The protein belongs to the protein kinase superfamily. Tyr protein kinase family. Ephrin receptor subfamily. In terms of assembly, heterotetramer upon binding of the ligand. The heterotetramer is composed of an ephrin dimer and a receptor dimer. Interacts (via PDZ-binding motif) with GRIP1 and PICK1 (via PDZ domain). Interacts with ARHGEF15; mediates ARHGEF15 phosphorylation, ubiquitination and degradation by the proteasome. Interacts with AQP1; involved in endolymph production in the inner ear. Interacts with EFNA5. Interacts with SPSB1. Interacts with SPSB4. Interacts with SH2D3C. In terms of processing, autophosphorylated; ligand binding stimulates autophosphorylation on tyrosine residues. Ligand binding induces cleavage by matrix metalloproteinases (MMPs) such as MMP7/MMP9, producing an EphB2/N-terminal fragment (NTF) and a C-terminal long fragment (EphB2-LF). EphB2-LF is further cleaved by MMPs, producing EphB2/CTF1 which is further cleaved by the PS1/gamma-secretase producing EphB2/CTF2. Post-translationally, polyubiquitinated; ligand binding stimulates ubiquitination. Ubiquitinated by RNF186 at Lys-891, mainly through 'Lys-27'-linked polyubiquitin chains. Ubiquitinated by CRL2(KLHDC2) E3 ligase complex. Expressed in the epithelial dark cells of the inner ear. Expressed in the region of the proximal tubules of the kidney nephron. Expressed in myogenic progenitor cells.

The protein localises to the cell membrane. It is found in the cell projection. It localises to the axon. The protein resides in the dendrite. It catalyses the reaction L-tyrosyl-[protein] + ATP = O-phospho-L-tyrosyl-[protein] + ADP + H(+). Receptor tyrosine kinase which binds promiscuously transmembrane ephrin-B family ligands residing on adjacent cells, leading to contact-dependent bidirectional signaling into neighboring cells. The signaling pathway downstream of the receptor is referred to as forward signaling while the signaling pathway downstream of the ephrin ligand is referred to as reverse signaling. Functions in axon guidance during development. Involved in the guidance of commissural axons, that form a major interhemispheric connection between the 2 temporal lobes of the cerebral cortex. Also involved in guidance of contralateral inner ear efferent growth cones at the midline and of retinal ganglion cell axons to the optic disk. In addition to axon guidance, also regulates dendritic spines development and maturation and stimulates the formation of excitatory synapses. Upon activation by EFNB1, abolishes the ARHGEF15-mediated negative regulation on excitatory synapse formation. Controls other aspects of development including angiogenesis, palate development and in inner ear development through regulation of endolymph production. Forward and reverse signaling through the EFNB2/EPHB2 complex regulate movement and adhesion of cells that tubularize the urethra and septate the cloaca. May function as a tumor suppressor. May be involved in the regulation of platelet activation and blood coagulation. The polypeptide is Ephrin type-B receptor 2 (Mus musculus (Mouse)).